A 276-amino-acid chain; its full sequence is Formamidopyrimidine-DNA glycosylase (276 aa).

The Schiff-base intermediate with DNA role is filled by Pro-2. Glu-3 (proton donor) is an active-site residue. The active-site Proton donor; for beta-elimination activity is the Lys-58. DNA-binding residues include His-92, Arg-111, and Lys-154. Residues 239–273 form an FPG-type zinc finger; it reads QVYGHVGEPCPVCGTKFEKIKVNGRGTTFCPHCQV. The active-site Proton donor; for delta-elimination activity is Arg-263.

This sequence belongs to the FPG family. As to quaternary structure, monomer. It depends on Zn(2+) as a cofactor.

It carries out the reaction Hydrolysis of DNA containing ring-opened 7-methylguanine residues, releasing 2,6-diamino-4-hydroxy-5-(N-methyl)formamidopyrimidine.. The catalysed reaction is 2'-deoxyribonucleotide-(2'-deoxyribose 5'-phosphate)-2'-deoxyribonucleotide-DNA = a 3'-end 2'-deoxyribonucleotide-(2,3-dehydro-2,3-deoxyribose 5'-phosphate)-DNA + a 5'-end 5'-phospho-2'-deoxyribonucleoside-DNA + H(+). Its function is as follows. Involved in base excision repair of DNA damaged by oxidation or by mutagenic agents. Acts as a DNA glycosylase that recognizes and removes damaged bases. Has a preference for oxidized purines, such as 7,8-dihydro-8-oxoguanine (8-oxoG). Has AP (apurinic/apyrimidinic) lyase activity and introduces nicks in the DNA strand. Cleaves the DNA backbone by beta-delta elimination to generate a single-strand break at the site of the removed base with both 3'- and 5'-phosphates. This chain is Formamidopyrimidine-DNA glycosylase, found in Lactobacillus helveticus (strain DPC 4571).